The sequence spans 160 residues: Transcription antitermination protein NusB (160 aa).

This sequence belongs to the NusB family.

Its function is as follows. Involved in transcription antitermination. Required for transcription of ribosomal RNA (rRNA) genes. Binds specifically to the boxA antiterminator sequence of the ribosomal RNA (rrn) operons. The sequence is that of Transcription antitermination protein NusB from Rhizobium meliloti (strain 1021) (Ensifer meliloti).